The primary structure comprises 208 residues: Pyridoxine/pyridoxamine 5'-phosphate oxidase (208 aa).

Residues 53–58 (RTVLLK), 68–69 (YS), K75, and Q100 contribute to the FMN site. Residue K58 coordinates substrate. Substrate is bound by residues Y118, R122, and S126. FMN is bound by residues 135-136 (QS) and W180. Position 186 to 188 (186 to 188 (RLH)) interacts with substrate. R190 serves as a coordination point for FMN.

It belongs to the pyridoxamine 5'-phosphate oxidase family. Homodimer. The cofactor is FMN.

The enzyme catalyses pyridoxamine 5'-phosphate + O2 + H2O = pyridoxal 5'-phosphate + H2O2 + NH4(+). The catalysed reaction is pyridoxine 5'-phosphate + O2 = pyridoxal 5'-phosphate + H2O2. The protein operates within cofactor metabolism; pyridoxal 5'-phosphate salvage; pyridoxal 5'-phosphate from pyridoxamine 5'-phosphate: step 1/1. It participates in cofactor metabolism; pyridoxal 5'-phosphate salvage; pyridoxal 5'-phosphate from pyridoxine 5'-phosphate: step 1/1. Functionally, catalyzes the oxidation of either pyridoxine 5'-phosphate (PNP) or pyridoxamine 5'-phosphate (PMP) into pyridoxal 5'-phosphate (PLP). The polypeptide is Pyridoxine/pyridoxamine 5'-phosphate oxidase (Xylella fastidiosa (strain 9a5c)).